Consider the following 542-residue polypeptide: 1-aminocyclopropane-1-carboxylate synthase 6 (542 aa).

A disordered region spans residues 1 to 28 (MRRSGNGGAAKKKKKRSASAASERRPRA). Lysine 379 is subject to N6-(pyridoxal phosphate)lysine.

It belongs to the class-I pyridoxal-phosphate-dependent aminotransferase family. The cofactor is pyridoxal 5'-phosphate. As to expression, expressed in leaves.

It is found in the plastid. The protein resides in the amyloplast membrane. The catalysed reaction is S-adenosyl-L-methionine = 1-aminocyclopropane-1-carboxylate + S-methyl-5'-thioadenosine + H(+). The protein operates within alkene biosynthesis; ethylene biosynthesis via S-adenosyl-L-methionine; ethylene from S-adenosyl-L-methionine: step 1/2. In terms of biological role, catalyzes the formation of 1-aminocyclopropane-1-carboxylate, a direct precursor of ethylene in higher plants. Required for the regulation of starch grain size in endosperm. This Oryza sativa subsp. japonica (Rice) protein is 1-aminocyclopropane-1-carboxylate synthase 6.